A 118-amino-acid chain; its full sequence is Large ribosomal subunit protein bL20 (118 aa).

The protein belongs to the bacterial ribosomal protein bL20 family.

Its function is as follows. Binds directly to 23S ribosomal RNA and is necessary for the in vitro assembly process of the 50S ribosomal subunit. It is not involved in the protein synthesizing functions of that subunit. The protein is Large ribosomal subunit protein bL20 of Sulfurihydrogenibium sp. (strain YO3AOP1).